The following is a 340-amino-acid chain: UDP-3-O-acylglucosamine N-acyltransferase (340 aa).

Catalysis depends on H240, which acts as the Proton acceptor.

The protein belongs to the transferase hexapeptide repeat family. LpxD subfamily. As to quaternary structure, homotrimer.

The catalysed reaction is a UDP-3-O-[(3R)-3-hydroxyacyl]-alpha-D-glucosamine + a (3R)-hydroxyacyl-[ACP] = a UDP-2-N,3-O-bis[(3R)-3-hydroxyacyl]-alpha-D-glucosamine + holo-[ACP] + H(+). The protein operates within bacterial outer membrane biogenesis; LPS lipid A biosynthesis. Its function is as follows. Catalyzes the N-acylation of UDP-3-O-acylglucosamine using 3-hydroxyacyl-ACP as the acyl donor. Is involved in the biosynthesis of lipid A, a phosphorylated glycolipid that anchors the lipopolysaccharide to the outer membrane of the cell. The chain is UDP-3-O-acylglucosamine N-acyltransferase from Pseudoalteromonas translucida (strain TAC 125).